Reading from the N-terminus, the 174-residue chain is UPF0316 protein lmo1776 (174 aa).

Helical transmembrane passes span 4 to 24 (GIFIVVTIFIVNILYVTIYTV), 36 to 56 (LAALSSVFEMIIYVVALSLVL), and 62 to 82 (IANVLAYAVGFGVGIIVGMKI).

The protein belongs to the UPF0316 family.

It is found in the cell membrane. This is UPF0316 protein lmo1776 from Listeria monocytogenes serovar 1/2a (strain ATCC BAA-679 / EGD-e).